Reading from the N-terminus, the 248-residue chain is MNVLISNDDGYLSEGIAVLARVTAEFANVRVVAPERDRSGVSNSLTLERPLQLKQAQNGFYYVNGTPTDCIHIGQSVFSDFQADFVFSGINRGANMGDDTLYSGTVAAATEAYLMGIPAVAFSLNDASGRYWATAEKALWTLLAHFFKNPPQSPILWNINIPAVEPEDVRGIKIARLGRRHHGQNVIPARNPRGEQIYWIGPVGRVSDKEEGTDFGECGAGFITVTPLQIDLTAYPDMAETAAFWHAD.

D8, D9, S39, and N91 together coordinate a divalent metal cation.

It belongs to the SurE nucleotidase family. A divalent metal cation is required as a cofactor.

Its subcellular location is the cytoplasm. The catalysed reaction is a ribonucleoside 5'-phosphate + H2O = a ribonucleoside + phosphate. In terms of biological role, nucleotidase that shows phosphatase activity on nucleoside 5'-monophosphates. The chain is 5'-nucleotidase SurE from Neisseria meningitidis serogroup C / serotype 2a (strain ATCC 700532 / DSM 15464 / FAM18).